The following is a 604-amino-acid chain: Putative JmjC domain-containing protein L887 (604 aa).

The JmjC domain occupies 1 to 127; the sequence is MNNMKKIIII…PNNKLNLIQP (127 aa). A helical membrane pass occupies residues 4-24; the sequence is MKKIIIISIIIIIIIVLLFYI.

It is found in the membrane. The chain is Putative JmjC domain-containing protein L887 from Acanthamoeba polyphaga (Amoeba).